We begin with the raw amino-acid sequence, 560 residues long: MKNFKLNRVKYKNIMSVGQNGIDIQLDKVQKTLITGRNGGGKSTMLEAITFGLFGKPFRDVKKGQLINSTNKKELLVELWMEYDEKKYYIKRGQKPNVFEITVNGTRLNESASSKDFQAEFEQLIGMSYASFKQIVVLGTAGYTPFMGLSTPARRKLVEDLLEVGTLAEMDKLNKALIRELNSQNQVLDVKKDSIIQQIKIYNDNVERQKKLTGDNLTRLQNMYDDLAKEARTLKSEIEEANERLVNIVLDEDPTDAFNKIGQEAFLIKSKIDSYNKVINMYHEGGLCPTCLSQLSSGDKVVSKIKDKVSECTHSFEQLSTHRDNLKVLVDEYRDNIKTQQSLANDIRNKKQSLIAAVDKAKKVKAAIEKASSEFIDHADEIALLQEELDKIVKTKTNLVMEKYHRGILTDMLKDSGIKGAIIKKYIPLFNKQINHYLKIMEADYVFTLDEEFNETIKSRGREDFSYASFSEGEKARIDIALLFTWRDIASIVSGVSISTLILDEVFDGSFDAEGIKGVANIINSMKNTNVFIISHKDHDPQEYGQHLQMKKVGRFTVMV.

36 to 43 is a binding site for ATP; it reads GRNGGGKS.

It to phage T5 protein D13 and to yeast RAD52. Consists of two subunits: gp46 and gp47.

Its function is as follows. Exonuclease that plays a role in viral genome replication, DNA recombination, and host DNA degradation. The protein is Exonuclease subunit 2 (46) of Enterobacteria phage T4 (Bacteriophage T4).